A 529-amino-acid polypeptide reads, in one-letter code: BAR/IMD domain-containing adapter protein 2-like 2 (529 aa).

An IMD domain is found at 1-239 (MAPEMDQFYR…HSPGLLGPVL (239 aa)). 2 disordered regions span residues 221–332 (EASR…GGAR) and 399–529 (NPLN…PLIR). Phosphoserine is present on residues S231, S272, and S304. The segment covering 301-317 (SASSLYSSSTQRSRSNS) has biased composition (low complexity). Over residues 321–331 (RPGGGGGGGGA) the composition is skewed to gly residues. The SH3 domain maps to 329 to 392 (GGARRVRALV…PEAYVKPLDE (64 aa)). The span at 439-459 (GNSTASSDYWDGQSRSRTPSH) shows a compositional bias: polar residues. A compositionally biased stretch (low complexity) spans 473–484 (PSSRRSSMGSMG). S479 and S482 each carry phosphoserine.

It localises to the cell membrane. The protein localises to the cell junction. The protein resides in the cytoplasmic vesicle membrane. In terms of biological role, phosphoinositides-binding protein that induces the formation of planar or gently curved membrane structures. Binds to phosphoinositides, including to phosphatidylinositol 4,5-bisphosphate (PtdIns(4,5)P2) headgroups. There seems to be no clear preference for a specific phosphoinositide. This is BAR/IMD domain-containing adapter protein 2-like 2 (BAIAP2L2) from Bos taurus (Bovine).